Reading from the N-terminus, the 96-residue chain is Transcription and mRNA export factor SUS1 (96 aa).

A Glycyl lysine isopeptide (Lys-Gly) (interchain with G-Cter in ubiquitin) cross-link involves residue K68.

Belongs to the ENY2 family. In terms of assembly, component of the nuclear pore complex (NPC)-associated TREX-2 complex (transcription and export complex 2), composed of at least SUS1, SAC3, THP1, SEM1, and CDC31. TREX-2 contains 2 SUS1 chains. The TREX-2 complex interacts with the nucleoporin NUP1. Component of the 1.8 MDa SAGA transcription coactivator-HAT complex. SAGA is built of 5 distinct domains with specialized functions. Within the SAGA complex, SUS1, SGF11, SGF73 and UBP8 form an additional subcomplex of SAGA called the DUB module (deubiquitination module). Interacts directly with THP1, SAC3, SGF11, and with the RNA polymerase II.

The protein resides in the nucleus. The protein localises to the nucleoplasm. It is found in the cytoplasm. It localises to the P-body. In terms of biological role, involved in mRNA export coupled transcription activation by association with both the TREX-2 and the SAGA complexes. At the promoters, SAGA is required for recruitment of the basal transcription machinery. It influences RNA polymerase II transcriptional activity through different activities such as TBP interaction and promoter selectivity, interaction with transcription activators, and chromatin modification through histone acetylation and deubiquitination. Within the SAGA complex, participates in a subcomplex required for deubiquitination of H2B and for the maintenance of steady-state H3 methylation levels. The TREX-2 complex functions in docking export-competent ribonucleoprotein particles (mRNPs) to the nuclear entrance of the nuclear pore complex (nuclear basket). TREX-2 participates in mRNA export and accurate chromatin positioning in the nucleus by tethering genes to the nuclear periphery. May also be involved in cytoplasmic mRNA decay by interaction with components of P-bodies. This chain is Transcription and mRNA export factor SUS1, found in Saccharomyces cerevisiae (strain RM11-1a) (Baker's yeast).